Reading from the N-terminus, the 394-residue chain is Phosphoglycerate kinase (394 aa).

Residues 21-23, R36, 59-62, R118, and R151 contribute to the substrate site; these read DFN and HLGR. S183 carries the phosphoserine modification. An ATP-binding site is contributed by K201. Position 299 is a phosphothreonine (T299). Residues E323 and 350–353 each bind ATP; that span reads GGDS.

The protein belongs to the phosphoglycerate kinase family. Monomer.

The protein localises to the cytoplasm. It carries out the reaction (2R)-3-phosphoglycerate + ATP = (2R)-3-phospho-glyceroyl phosphate + ADP. It functions in the pathway carbohydrate degradation; glycolysis; pyruvate from D-glyceraldehyde 3-phosphate: step 2/5. The chain is Phosphoglycerate kinase from Geobacillus sp. (strain WCH70).